The chain runs to 431 residues: 4-hydroxy-3-methylbut-2-en-1-yl diphosphate synthase (flavodoxin) (431 aa).

Over residues Met1–Val12 the composition is skewed to basic and acidic residues. The segment at Met1–Gln20 is disordered. Cys310, Cys313, Cys356, and Glu363 together coordinate [4Fe-4S] cluster.

The protein belongs to the IspG family. Requires [4Fe-4S] cluster as cofactor.

The enzyme catalyses (2E)-4-hydroxy-3-methylbut-2-enyl diphosphate + oxidized [flavodoxin] + H2O + 2 H(+) = 2-C-methyl-D-erythritol 2,4-cyclic diphosphate + reduced [flavodoxin]. It functions in the pathway isoprenoid biosynthesis; isopentenyl diphosphate biosynthesis via DXP pathway; isopentenyl diphosphate from 1-deoxy-D-xylulose 5-phosphate: step 5/6. In terms of biological role, converts 2C-methyl-D-erythritol 2,4-cyclodiphosphate (ME-2,4cPP) into 1-hydroxy-2-methyl-2-(E)-butenyl 4-diphosphate. In Rhodopseudomonas palustris (strain TIE-1), this protein is 4-hydroxy-3-methylbut-2-en-1-yl diphosphate synthase (flavodoxin).